The chain runs to 183 residues: Peptidyl-tRNA hydrolase (183 aa).

Tyr-14 serves as a coordination point for tRNA. His-19 acts as the Proton acceptor in catalysis. Tyr-61, Asn-63, and Asn-109 together coordinate tRNA.

The protein belongs to the PTH family. Monomer.

The protein localises to the cytoplasm. The enzyme catalyses an N-acyl-L-alpha-aminoacyl-tRNA + H2O = an N-acyl-L-amino acid + a tRNA + H(+). Functionally, hydrolyzes ribosome-free peptidyl-tRNAs (with 1 or more amino acids incorporated), which drop off the ribosome during protein synthesis, or as a result of ribosome stalling. Its function is as follows. Catalyzes the release of premature peptidyl moieties from peptidyl-tRNA molecules trapped in stalled 50S ribosomal subunits, and thus maintains levels of free tRNAs and 50S ribosomes. This Aliarcobacter butzleri (strain RM4018) (Arcobacter butzleri) protein is Peptidyl-tRNA hydrolase.